We begin with the raw amino-acid sequence, 801 residues long: uncharacterized protein (801 aa).

The region spanning 1–93 (MSWVMVSPEL…GGAYAAAEAA (93 aa)) is the PE domain.

The protein belongs to the mycobacterial PE family. PGRS subfamily.

This is an uncharacterized protein from Mycobacterium tuberculosis (strain ATCC 25618 / H37Rv).